Here is a 213-residue protein sequence, read N- to C-terminus: Protein MobE (213 aa).

The protein is Protein MobE (mobE) of Acidithiobacillus ferrooxidans (Thiobacillus ferrooxidans).